The primary structure comprises 229 residues: Glutamine amidotransferase-like class 1 domain-containing protein 1 (229 aa).

A signal peptide spans 1–34; the sequence is MKKQGAPVSGGGTERLTKPSCLMVGSAVAEGVSA. N-linked (GlcNAc...) asparagine glycosylation is found at asparagine 154 and asparagine 212.

Belongs to the peptidase C56 family. Homotetramer. Component of the FERRY complex.

The protein resides in the secreted. The protein localises to the early endosome. Its function is as follows. Component of the FERRY complex (Five-subunit Endosomal Rab5 and RNA/ribosome intermediary). The FERRY complex directly interacts with mRNAs and RAB5A, and functions as a RAB5A effector involved in the localization and the distribution of specific mRNAs most likely by mediating their endosomal transport. The complex recruits mRNAs and ribosomes to early endosomes through direct mRNA-interaction. This Xenopus laevis (African clawed frog) protein is Glutamine amidotransferase-like class 1 domain-containing protein 1.